The sequence spans 321 residues: Transcription factor MYB60 (321 aa).

HTH myb-type domains are found at residues 9-65 (KVGI…RPGI) and 66-116 (KRGN…KKKI). 2 DNA-binding regions (H-T-H motif) span residues 37–61 (WRSV…TNYL) and 89–112 (WAAI…NTHL). Residues Cys49 and Cys53 each carry the S-nitrosocysteine modification. 2 disordered regions span residues 196 to 215 (SPKA…EGSI) and 263 to 291 (HHQT…QKKH). Positions 206–215 (QNSSLEEGSI) are enriched in polar residues. The span at 273–290 (SDDHDHDHEMKMDHDQKK) shows a compositional bias: basic and acidic residues.

In terms of tissue distribution, restricted to stomatal guard cells. Mostly expressed in leaves, cotyledons, hypocotyls, seeds and ripened berry skins.

It is found in the nucleus. Functionally, transcription factor involved in the regulation of gene (e.g. drought-regulated and flavonoid biosynthetic genes) expression and stomatal movements leading to negative regulation of responses to drought and responses to other physiological stimuli (e.g. light). This Vitis vinifera (Grape) protein is Transcription factor MYB60.